The chain runs to 1722 residues: Signal-induced proliferation-associated 1-like protein 2 (1722 aa).

Disordered stretches follow at residues 1 to 29 (MSDPRPSQAEKHKLGRAASKFKDPSRAMQ) and 45 to 73 (MGPATLNTSSLSEGGGGGGGPANGTPAVP). A compositionally biased stretch (gly residues) spans 57–66 (EGGGGGGGPA). Residues Ser149, Ser380, and Ser384 each carry the phosphoserine modification. Residues 362-404 (ASAASQTPVPVGPAGGCESPLGSKEDLNAKENPDADEGDGKSN) are disordered. The span at 384-403 (SKEDLNAKENPDADEGDGKS) shows a compositional bias: basic and acidic residues. Residues 596–813 (LLKLDEQGLS…RTRHEYLKDL (218 aa)) form the Rap-GAP domain. Residues 951–1027 (EMTLRRNGLG…VKVVIIQPHE (77 aa)) enclose the PDZ domain. Ser1030 is subject to Phosphoserine. Disordered regions lie at residues 1068–1172 (HRVP…DHED), 1197–1246 (ERAL…FGSG), and 1328–1361 (AADGSMGDLSEVSSHSSGSHRSGSPSTHCSKSTG). 2 stretches are compositionally biased toward low complexity: residues 1091 to 1103 (LQCQPLLQQAQAA) and 1120 to 1131 (SSPSNQSSSSDP). Basic and acidic residues predominate over residues 1197–1218 (ERALQKDGSCKDSPNKLSHIGD). Low complexity predominate over residues 1220–1237 (SCSSHSSSNTLSSNTSSN). Phosphoserine is present on Ser1245. Over residues 1328-1355 (AADGSMGDLSEVSSHSSGSHRSGSPSTH) the composition is skewed to low complexity. Phosphoserine is present on residues Ser1461, Ser1472, Ser1478, Ser1488, Ser1549, Ser1552, and Ser1591. A coiled-coil region spans residues 1652-1712 (STLTGKVNQL…ATAQLRTFTE (61 aa)).

The chain is Signal-induced proliferation-associated 1-like protein 2 (Sipa1l2) from Rattus norvegicus (Rat).